Consider the following 187-residue polypeptide: Ribosome-recycling factor (187 aa).

Belongs to the RRF family.

The protein resides in the cytoplasm. In terms of biological role, responsible for the release of ribosomes from messenger RNA at the termination of protein biosynthesis. May increase the efficiency of translation by recycling ribosomes from one round of translation to another. The polypeptide is Ribosome-recycling factor (Parvibaculum lavamentivorans (strain DS-1 / DSM 13023 / NCIMB 13966)).